A 252-amino-acid chain; its full sequence is Probable 6-phosphogluconolactonase 5 (252 aa).

It belongs to the glucosamine/galactosamine-6-phosphate isomerase family. 6-phosphogluconolactonase subfamily.

The protein localises to the cytoplasm. The protein resides in the cytosol. The catalysed reaction is 6-phospho-D-glucono-1,5-lactone + H2O = 6-phospho-D-gluconate + H(+). It participates in carbohydrate degradation; pentose phosphate pathway; D-ribulose 5-phosphate from D-glucose 6-phosphate (oxidative stage): step 2/3. Functionally, catalyzes the hydrolysis of 6-phosphogluconolactone to 6-phosphogluconate. The sequence is that of Probable 6-phosphogluconolactonase 5 from Arabidopsis thaliana (Mouse-ear cress).